A 127-amino-acid polypeptide reads, in one-letter code: Modulator protein MzrA (127 aa).

Topologically, residues 1–10 are cytoplasmic; that stretch reads MGLQNMTLRR. A helical transmembrane segment spans residues 11 to 31; the sequence is FTLSMSALLLLCALLWLWAAL. The Periplasmic segment spans residues 32–127; sequence EQQESSLAIR…RLRDAPHRLG (96 aa).

This sequence belongs to the MzrA family. Interacts with EnvZ.

Its subcellular location is the cell inner membrane. Modulates the activity of the EnvZ/OmpR two-component regulatory system, probably by directly modulating EnvZ enzymatic activity and increasing stability of phosphorylated OmpR. The chain is Modulator protein MzrA from Enterobacter lignolyticus (strain SCF1).